The chain runs to 248 residues: PF03932 family protein CutC (248 aa).

Belongs to the CutC family. Homodimer.

Its subcellular location is the cytoplasm. The chain is PF03932 family protein CutC from Salmonella typhimurium (strain LT2 / SGSC1412 / ATCC 700720).